The sequence spans 143 residues: Large ribosomal subunit protein uL13 (143 aa).

The protein belongs to the universal ribosomal protein uL13 family. As to quaternary structure, part of the 50S ribosomal subunit.

Functionally, this protein is one of the early assembly proteins of the 50S ribosomal subunit, although it is not seen to bind rRNA by itself. It is important during the early stages of 50S assembly. This Variovorax paradoxus (strain S110) protein is Large ribosomal subunit protein uL13.